Reading from the N-terminus, the 207-residue chain is Ribosomal RNA small subunit methyltransferase G (207 aa).

S-adenosyl-L-methionine-binding positions include Gly-76, Gln-81, 127–128, and Arg-141; that span reads VE.

This sequence belongs to the methyltransferase superfamily. RNA methyltransferase RsmG family.

The protein resides in the cytoplasm. It catalyses the reaction guanosine(527) in 16S rRNA + S-adenosyl-L-methionine = N(7)-methylguanosine(527) in 16S rRNA + S-adenosyl-L-homocysteine. Specifically methylates the N7 position of guanine in position 527 of 16S rRNA. This is Ribosomal RNA small subunit methyltransferase G from Neisseria meningitidis serogroup A / serotype 4A (strain DSM 15465 / Z2491).